The primary structure comprises 557 residues: UvrABC system protein C (557 aa).

Residues 14 to 89 enclose the GIY-YIG domain; that stretch reads EEPGVYIFKN…IKKYRPKYNV (76 aa). The UVR domain occupies 194-229; the sequence is EEVFDYLKEKMETHSKMLDFENAAKYRDLLLNLSNV.

The protein belongs to the UvrC family. In terms of assembly, interacts with UvrB in an incision complex.

The protein resides in the cytoplasm. Its function is as follows. The UvrABC repair system catalyzes the recognition and processing of DNA lesions. UvrC both incises the 5' and 3' sides of the lesion. The N-terminal half is responsible for the 3' incision and the C-terminal half is responsible for the 5' incision. The sequence is that of UvrABC system protein C from Thermotoga sp. (strain RQ2).